The chain runs to 355 residues: Peptide chain release factor 1 (355 aa).

The residue at position 231 (Gln-231) is an N5-methylglutamine. Over residues 280 to 291 the composition is skewed to basic and acidic residues; the sequence is SERLAKESEARK. Residues 280–303 are disordered; the sequence is SERLAKESEARKSQVGSGDRSERI.

Belongs to the prokaryotic/mitochondrial release factor family. In terms of processing, methylated by PrmC. Methylation increases the termination efficiency of RF1.

Its subcellular location is the cytoplasm. Its function is as follows. Peptide chain release factor 1 directs the termination of translation in response to the peptide chain termination codons UAG and UAA. The protein is Peptide chain release factor 1 of Campylobacter jejuni (strain RM1221).